We begin with the raw amino-acid sequence, 246 residues long: MADS-box transcription factor 14 (246 aa).

Residues 1 to 61 form the MADS-box domain; the sequence is MGRGKVQLKR…GKLYEYATDS (61 aa). The K-box domain maps to 88–178; that stretch reads QGNWCHEYRK…QKELVEKQKV (91 aa). A disordered region spans residues 180–199; it reads KQQVQWDQTQPQTSSSSSSF.

As to quaternary structure, may interact with the K-box of MADS1 and MADS6. As to expression, highly expressed in sterile lemmas, at intermediate levels in stamens, and weakly in lemmas, paleas and carpels.

The protein localises to the nucleus. Functionally, probable transcription factor. May be involved in the control of flowering time. In Oryza sativa subsp. japonica (Rice), this protein is MADS-box transcription factor 14 (MADS14).